A 537-amino-acid polypeptide reads, in one-letter code: GTPase LSG1-1 (537 aa).

Positions 158–362 (WRQLWRVLER…LCDCPGLVFP (205 aa)) constitute a CP-type G domain. The DARXP motif motif lies at 176–180 (DARDP). The tract at residues 206–209 (NKAD) is G4. 206–209 (NKAD) contacts GTP. The G5 stretch occupies residues 234-236 (SAK). Residues 311–318 (GYPNVGKS) are G1. 314 to 319 (NVGKSS) lines the GTP pocket. The G2 stretch occupies residues 337–341 (GKTKH). Positions 355–358 (DCPG) are G3. Gly-358 provides a ligand contact to GTP. The segment at 484 to 508 (LGAETREGSQTEKKGEEAPSLGLDQ) is disordered. Over residues 487–500 (ETREGSQTEKKGEE) the composition is skewed to basic and acidic residues.

The protein belongs to the TRAFAC class YlqF/YawG GTPase family. Ubiquitous, with the highest expression in stem and hypsophyll on day 66.

It is found in the cytoplasm. In terms of biological role, GTPase that might be redundant with LSG1-2 for ribosome biogenesis. Binds to 23S rRNA. The protein is GTPase LSG1-1 of Arabidopsis thaliana (Mouse-ear cress).